Here is a 439-residue protein sequence, read N- to C-terminus: MNPMRVLSLLACLAVAALAKPNGRMDNSVNQALKPSQWLSGSQLEAIPALDDFTIERLENMNLERGAELLQQVYHLSQIHHNVEPNYVPSGIQVYVPKPNGDKTVAPLNEMIQRLKQKQNFGEDEVTIIVTGLPQTSETVKKATRKLVQAYMQRYNLQQQRQHGKNGNQDYQDQSNEQRKNQRTSSEEDYSEEVKNAKTQSGDIIVIDLGSKLNTYERYAMLDIEKTGAKIGKWIVQMVNELDMPFDTIHLIGQNVGAHVAGAAAQEFTRLTGHKLRRVTGLDPSKIVAKSKNTLTGLARGDAEFVDAIHTSVYGMGTPIRSGDVDFYPNGPAAGVPGASNVVEAAMRATRYFAESVRPGNERSFPAVPANSLQQYKQNDGFGKRAYMGIDTAHDLEGDYILQVNPKSPFGRNAPAQKQSSYHGVHQAWNTNQDSKDYQ.

The signal sequence occupies residues 1-20 (MNPMRVLSLLACLAVAALAK). The span at 158-175 (QQQRQHGKNGNQDYQDQS) shows a compositional bias: polar residues. Disordered stretches follow at residues 158 to 196 (QQQRQHGKNGNQDYQDQSNEQRKNQRTSSEEDYSEEVKN) and 407 to 439 (KSPFGRNAPAQKQSSYHGVHQAWNTNQDSKDYQ). At tyrosine 171 the chain carries Phosphotyrosine. 3 positions are modified to phosphoserine: serine 175, serine 185, and serine 186. Tyrosine 190 carries the phosphotyrosine modification. Phosphoserine is present on serine 191. The segment covering 416–433 (AQKQSSYHGVHQAWNTNQ) has biased composition (polar residues). Phosphoserine is present on serine 435.

It belongs to the AB hydrolase superfamily. Lipase family. In terms of processing, tyrosine sulfation occurs in the female only and plays an essential functional role. As to expression, expressed in females only.

The protein localises to the secreted. It localises to the vesicle. In terms of biological role, vitellogenin is the major yolk protein of eggs where it is used as a food source during embryogenesis. Along with Yp2 and Yp3, and their receptor yl/yolkless, required for maintenance of microtubule plus-end orientation towards the posterior pole of oocytes. Involved in polarized localization of germ plasm components, such as osk mRNA and vas protein, to the oocyte posterior cortex. Receptor-mediated endocytosis by yl/yolkless is crucial for actin reorganization, mediated by osk isoform A/Long, required to anchor germ plasm components to the oocyte cortex. The protein is Vitellogenin-1 (Yp1) of Drosophila melanogaster (Fruit fly).